The primary structure comprises 176 residues: Zinc finger protein 428 (176 aa).

The segment at 1–152 (MTETREPTET…EEEGGTYHCT (152 aa)) is disordered. The span at 16 to 46 (LEEDDEDLSPEPDSEEEEEEEEEETTDDPEY) shows a compositional bias: acidic residues. Threonine 96 bears the Phosphothreonine mark. Residues 126–138 (PSRTGETRPAGRD) show a composition bias toward basic and acidic residues. The C2H2-type zinc finger occupies 149–171 (YHCTECEDSFDNLGELHGHFMLH).

The polypeptide is Zinc finger protein 428 (Znf428) (Mus musculus (Mouse)).